The following is a 215-amino-acid chain: Cytochrome b6 (215 aa).

Residues 32–52 (IFYCIGGIVFTSFLIQVASGF) form a helical membrane-spanning segment. Residue C35 participates in heme c binding. Heme b-binding residues include H86 and H100. Transmembrane regions (helical) follow at residues 90 to 110 (ASMM…TGGF), 116 to 136 (LTWV…VTGY), and 186 to 206 (LHTF…FLMI). Positions 187 and 202 each coordinate heme b.

Belongs to the cytochrome b family. PetB subfamily. The 4 large subunits of the cytochrome b6-f complex are cytochrome b6, subunit IV (17 kDa polypeptide, PetD), cytochrome f and the Rieske protein, while the 4 small subunits are PetG, PetL, PetM and PetN. The complex functions as a dimer. It depends on heme b as a cofactor. Requires heme c as cofactor.

It is found in the plastid. The protein localises to the chloroplast thylakoid membrane. Component of the cytochrome b6-f complex, which mediates electron transfer between photosystem II (PSII) and photosystem I (PSI), cyclic electron flow around PSI, and state transitions. The protein is Cytochrome b6 of Gracilaria tenuistipitata var. liui (Red alga).